Reading from the N-terminus, the 191-residue chain is Dephospho-CoA kinase (191 aa).

Positions 3–191 constitute a DPCK domain; the sequence is AIGITGSYAS…KLIKNLECQV (189 aa). ATP is bound at residue 11–16; sequence ASGKTF.

Belongs to the CoaE family.

It is found in the cytoplasm. The catalysed reaction is 3'-dephospho-CoA + ATP = ADP + CoA + H(+). It functions in the pathway cofactor biosynthesis; coenzyme A biosynthesis; CoA from (R)-pantothenate: step 5/5. Functionally, catalyzes the phosphorylation of the 3'-hydroxyl group of dephosphocoenzyme A to form coenzyme A. This chain is Dephospho-CoA kinase, found in Rickettsia typhi (strain ATCC VR-144 / Wilmington).